Consider the following 143-residue polypeptide: Large ribosomal subunit protein uL13 (143 aa).

It belongs to the universal ribosomal protein uL13 family. In terms of assembly, part of the 50S ribosomal subunit.

Its function is as follows. This protein is one of the early assembly proteins of the 50S ribosomal subunit, although it is not seen to bind rRNA by itself. It is important during the early stages of 50S assembly. The polypeptide is Large ribosomal subunit protein uL13 (Caldanaerobacter subterraneus subsp. tengcongensis (strain DSM 15242 / JCM 11007 / NBRC 100824 / MB4) (Thermoanaerobacter tengcongensis)).